A 246-amino-acid chain; its full sequence is Trypsin-5 (246 aa).

The first 15 residues, 1-15 (MNSLLFLALVGAAVA), serve as a signal peptide directing secretion. Residues 16 to 23 (FPVDDDDK) constitute a propeptide, activation peptide. A Peptidase S1 domain is found at 24–244 (IVGGYTCREN…YVDWIQDTIA (221 aa)). An intrachain disulfide couples Cys-48 to Cys-64. Residues His-63 and Asp-107 each act as charge relay system in the active site. Intrachain disulfides connect Cys-139–Cys-206, Cys-171–Cys-185, and Cys-196–Cys-220. The active-site Charge relay system is Ser-200.

Belongs to the peptidase S1 family. Proteolytically cleaved and activated by an autocatalytic mechanism. Cleavage by CTRC inhibits autoactivation. Expressed in the heart, lung, brain, kidney, liver, epididymis, ovary and uterus. Expression in the testis is limited to round and elongating spermatids.

The protein localises to the cytoplasmic vesicle. It is found in the secretory vesicle. The protein resides in the acrosome. It catalyses the reaction Preferential cleavage: Arg-|-Xaa, Lys-|-Xaa.. Its activity is regulated as follows. Activated by autocatalytic cleavage. Cleavage by CTRC inhibits autoactivation. Serine protease capable of autoactivation. This chain is Trypsin-5, found in Mus musculus (Mouse).